Reading from the N-terminus, the 410-residue chain is Probable peptidoglycan glycosyltransferase FtsW (410 aa).

9 helical membrane-spanning segments follow: residues 39-59 (LDPLLIWSATGLLLIGLVMVY), 78-98 (YFLLRHAMFLAVGIGAGLAAF), 108-128 (FAPWLFLIGVMLLVVVLIPGV), 177-197 (GFLPMAAMILLVGFLLLGEPD), 198-218 (FGAFVVITAIAFGVLFLGGIN), 221-241 (VFALLALVAVIGFMLLIWLSP), 303-323 (IAEELGFAGVLTVIALFAILI), 342-362 (GLVAMGIGLWLGVQSFINMGV), and 374-394 (LPLMSFGGSGIVANCLALAIL).

The protein belongs to the SEDS family. FtsW subfamily.

The protein localises to the cell inner membrane. The catalysed reaction is [GlcNAc-(1-&gt;4)-Mur2Ac(oyl-L-Ala-gamma-D-Glu-L-Lys-D-Ala-D-Ala)](n)-di-trans,octa-cis-undecaprenyl diphosphate + beta-D-GlcNAc-(1-&gt;4)-Mur2Ac(oyl-L-Ala-gamma-D-Glu-L-Lys-D-Ala-D-Ala)-di-trans,octa-cis-undecaprenyl diphosphate = [GlcNAc-(1-&gt;4)-Mur2Ac(oyl-L-Ala-gamma-D-Glu-L-Lys-D-Ala-D-Ala)](n+1)-di-trans,octa-cis-undecaprenyl diphosphate + di-trans,octa-cis-undecaprenyl diphosphate + H(+). Its pathway is cell wall biogenesis; peptidoglycan biosynthesis. Functionally, peptidoglycan polymerase that is essential for cell division. The protein is Probable peptidoglycan glycosyltransferase FtsW of Aromatoleum aromaticum (strain DSM 19018 / LMG 30748 / EbN1) (Azoarcus sp. (strain EbN1)).